Here is a 283-residue protein sequence, read N- to C-terminus: Nucleotide-binding protein IL0393 (283 aa).

8-15 provides a ligand contact to ATP; it reads GRSGSGKT. 56–59 serves as a coordination point for GTP; sequence DVRN.

Belongs to the RapZ-like family.

In terms of biological role, displays ATPase and GTPase activities. The polypeptide is Nucleotide-binding protein IL0393 (Idiomarina loihiensis (strain ATCC BAA-735 / DSM 15497 / L2-TR)).